A 101-amino-acid chain; its full sequence is Biogenesis of lysosome-related organelles complex 1 subunit SNN1 (101 aa).

Residues 62 to 100 (DSNEYKAQFKEVNNLQKRLQKITLRLKDLERRSSQLTTS) are a coiled coil.

The protein belongs to the SNAPIN family. In terms of assembly, component of the biogenesis of lysosome-related organelles complex-1 (BLOC-1).

The protein resides in the endosome. Functionally, component of the biogenesis of lysosome-related organelles complex-1 (BLOC-1), a complex involved in endosomal cargo sorting. The chain is Biogenesis of lysosome-related organelles complex 1 subunit SNN1 (SNN1) from Candida glabrata (strain ATCC 2001 / BCRC 20586 / JCM 3761 / NBRC 0622 / NRRL Y-65 / CBS 138) (Yeast).